Here is a 456-residue protein sequence, read N- to C-terminus: CBL-interacting serine/threonine-protein kinase 2 (456 aa).

Residues 12-266 (YEVGRLLGQG…IAKIKESSWF (255 aa)) enclose the Protein kinase domain. ATP-binding positions include 18–26 (LGQGTFAKV) and Lys41. Catalysis depends on Asp134, which acts as the Proton acceptor. The activation loop stretch occupies residues 152–181 (DFGLSALADCKRQDGLLHTTCGTPAYVAPE). A Phosphoserine modification is found at Ser156. Thr170 is modified (phosphothreonine). A disordered region spans residues 280–309 (MEKQQVREATNPMEAGGSGQNENGENHEPP). The 25-residue stretch at 309–333 (PRLATLNAFDIIALSTGFGLAGLFG) folds into the NAF domain. A PPI region spans residues 338–367 (KRESRFASQKPASEIISKLVEVAKCLKLKI).

It belongs to the protein kinase superfamily. CAMK Ser/Thr protein kinase family. SNF1 subfamily. Interacts with CBL2, CBL3 and CBL5. Mn(2+) is required as a cofactor.

It catalyses the reaction L-seryl-[protein] + ATP = O-phospho-L-seryl-[protein] + ADP + H(+). It carries out the reaction L-threonyl-[protein] + ATP = O-phospho-L-threonyl-[protein] + ADP + H(+). In terms of biological role, CIPK serine-threonine protein kinases interact with CBL proteins. Binding of a CBL protein to the regulatory NAF domain of CIPK protein lead to the activation of the kinase in a calcium-dependent manner. The polypeptide is CBL-interacting serine/threonine-protein kinase 2 (CIPK2) (Arabidopsis thaliana (Mouse-ear cress)).